We begin with the raw amino-acid sequence, 135 residues long: uncharacterized protein (135 aa).

This is an uncharacterized protein from Bacillus subtilis (strain 168).